The chain runs to 73 residues: UPF0057 membrane protein At4g30650 (73 aa).

The next 2 membrane-spanning stretches (helical) occupy residues 4–24 and 37–57; these read NMEVFCEILIAILLPPLGVCL and LVLTILGYIPGIIYALYVIVF.

It belongs to the UPF0057 (PMP3) family.

It is found in the membrane. This is UPF0057 membrane protein At4g30650 from Arabidopsis thaliana (Mouse-ear cress).